An 873-amino-acid polypeptide reads, in one-letter code: Kinase suppressor of Ras 1 (873 aa).

Disordered regions lie at residues 1–24, 174–230, and 251–281; these read MDRA…GAAA, EHKM…PGLS, and LHSF…PSRK. A mediates association with membranes region spans residues 1–170; that stretch reads MDRAALRAAA…ALTCLRKVTG (170 aa). Residues 206-216 are compositionally biased toward polar residues; that stretch reads ASTQGPRSISV. Phosphothreonine occurs at positions 256 and 260. Serine 297 carries the post-translational modification Phosphoserine; by MARK3. Serine 320 bears the Phosphoserine mark. The segment at 333–377 adopts a Phorbol-ester/DAG-type zinc-finger fold; the sequence is THRFSTKSWLSQVCNVCQKSMIFGVKCKHCRLKCHNKCTKEAPAC. Position 334 (histidine 334) interacts with Zn(2+). Residue serine 337 is modified to Phosphoserine. Residues cysteine 346, cysteine 349, cysteine 359, cysteine 362, histidine 367, cysteine 370, and cysteine 377 each coordinate Zn(2+). A Phosphoserine; by MARK3 modification is found at serine 392. At threonine 411 the chain carries Phosphothreonine. 2 disordered regions span residues 416 to 473 and 506 to 544; these read LTKK…RFSF and HEAE…PISR. The span at 429 to 458 shows a compositional bias: low complexity; that stretch reads SSSNPSSTTSSTPSSPAPFLTSSNPSSATT. The span at 506 to 519 shows a compositional bias: basic and acidic residues; it reads HEAEAEEPEAGKSE. The residue at position 518 (serine 518) is a Phosphoserine. Positions 520-530 are enriched in acidic residues; it reads AEDDEEDEVDD. The Protein kinase domain maps to 563 to 833; the sequence is VELGEPIGQG…MDMLERLPKL (271 aa). 569 to 577 serves as a coordination point for ATP; it reads IGQGRWGRV. The Proton acceptor role is filled by aspartate 683. Lysine 685 and aspartate 700 together coordinate ATP. Serine 838 carries the phosphoserine modification.

Belongs to the protein kinase superfamily. TKL Ser/Thr protein kinase family. Homodimer. Heterodimerizes (via N-terminus) with BRAF (via N-terminus) in a MAP2K1/MEK1 or MAP2K2/MEK2-dependent manner. Interacts with MAP2K1/MEK1 and MAP2K2/MEK2. Binding to MAP2K1/MEK1 releases the intramolecular inhibitory interaction between KSR1 N-terminus and kinase domains which is required for the subsequent RSK1 dimerization with BRAF. Identified in a complex with AKAP13, MAP2K1 and BRAF. Interacts with AKAP13 and BRAF. Interacts with RAF and MAPK/ERK, in a Ras-dependent manner. Interacts with 14-3-3 proteins including YWHAB. Interacts with HSP90AA1/HSP90, YWHAE/14-3-3 and CDC37. The binding of 14-3-3 proteins to phosphorylated KSR1 prevents the membrane localization. Interacts with MARK3/C-TAK1. Interacts with PPP2R1A and PPP2CA. Interacts with VRK2. Post-translationally, phosphorylated on Ser-297 and, to a higher extent, on Ser-392 by MARK3. Dephosphorylated on Ser-392 by PPP2CA. Phosphorylated KSR1 is cytoplasmic and dephosphorylated KSR1 is membrane-associated. Phosphorylated by PKA at Ser-838. Phosphorylation at Ser-838 is required for cAMP-dependent activation of MAPK1 and/or MAPK3. Expressed in brain, spleen and testis. Isoform 1 is highly expressed spleen and weakly in testis, and isoform 2 is highly expressed in brain and weakly in testis.

It is found in the cytoplasm. The protein resides in the membrane. Its subcellular location is the cell membrane. It localises to the cell projection. The protein localises to the ruffle membrane. It is found in the endoplasmic reticulum membrane. It catalyses the reaction L-seryl-[protein] + ATP = O-phospho-L-seryl-[protein] + ADP + H(+). The catalysed reaction is L-threonyl-[protein] + ATP = O-phospho-L-threonyl-[protein] + ADP + H(+). In terms of biological role, part of a multiprotein signaling complex which promotes phosphorylation of Raf family members and activation of downstream MAP kinases. Independently of its kinase activity, acts as MAP2K1/MEK1 and MAP2K2/MEK2-dependent allosteric activator of BRAF; upon binding to MAP2K1/MEK1 or MAP2K2/MEK2, dimerizes with BRAF and promotes BRAF-mediated phosphorylation of MAP2K1/MEK1 and/or MAP2K2/MEK2. Promotes activation of MAPK1 and/or MAPK3, both in response to EGF and to cAMP. Its kinase activity is unsure. Some protein kinase activity has been detected in vitro, however the physiological relevance of this activity is unknown. The polypeptide is Kinase suppressor of Ras 1 (Ksr1) (Mus musculus (Mouse)).